The primary structure comprises 194 residues: Gonadal protein gdl (194 aa).

It belongs to the gonadal family. In terms of tissue distribution, in stage 6-14 egg chamber nurse cells and oocytes of adult females and spermatocyte cysts and bundles of maturing sperm of larval, pupal and adult males.

This Drosophila melanogaster (Fruit fly) protein is Gonadal protein gdl (gdl).